The sequence spans 380 residues: D-threo-3-hydroxyaspartate dehydratase (380 aa).

An N6-(pyridoxal phosphate)lysine modification is found at Lys-43.

Belongs to the DSD1 family. As to quaternary structure, monomer. Pyridoxal 5'-phosphate is required as a cofactor. It depends on Mn(2+) as a cofactor. Co(2+) serves as cofactor. Requires Ni(2+) as cofactor.

The catalysed reaction is (3R)-3-hydroxy-D-aspartate = oxaloacetate + NH4(+). Strongly inhibited by hydroxylamine. Modestly inhibited by EDTA. In terms of biological role, catalyzes the deamination of D-threo-3-hydroxyaspartate (D-THA). Also exhibits dehydratase activity towards L-threo-3-hydroxyaspartate (L-THA), L-erythro-3-hydroxyaspartate (L-EHA) and D-serine. In Delftia sp. (strain HT23), this protein is D-threo-3-hydroxyaspartate dehydratase (dthadh).